The sequence spans 222 residues: Tetratricopeptide repeat protein 9A (222 aa).

Disordered regions lie at residues 1 to 49 and 88 to 116; these read MERK…AAAE and KGLL…GRLS. The stretch at 56-89 is one TPR 1 repeat; the sequence is RAHEFKSQGAQCYKDKKFREAIGKYHRALLELKG. Ser-105 is subject to Phosphoserine. TPR repeat units lie at residues 125–160 and 161–194; these read AIEI…LKKE and GENF…RTQQ.

It belongs to the TTC9 family.

In Homo sapiens (Human), this protein is Tetratricopeptide repeat protein 9A (TTC9).